The primary structure comprises 993 residues: Isoleucine--tRNA ligase (993 aa).

A 'HIGH' region motif is present at residues 64–74 (PYANGNIHIGH). An L-isoleucyl-5'-AMP-binding site is contributed by E621. A 'KMSKS' region motif is present at residues 662-666 (KMSKS). K665 serves as a coordination point for ATP.

Belongs to the class-I aminoacyl-tRNA synthetase family. IleS type 1 subfamily. In terms of assembly, monomer.

The protein resides in the cytoplasm. The enzyme catalyses tRNA(Ile) + L-isoleucine + ATP = L-isoleucyl-tRNA(Ile) + AMP + diphosphate. Catalyzes the attachment of isoleucine to tRNA(Ile). As IleRS can inadvertently accommodate and process structurally similar amino acids such as valine, to avoid such errors it has two additional distinct tRNA(Ile)-dependent editing activities. One activity is designated as 'pretransfer' editing and involves the hydrolysis of activated Val-AMP. The other activity is designated 'posttransfer' editing and involves deacylation of mischarged Val-tRNA(Ile). This Mesorhizobium japonicum (strain LMG 29417 / CECT 9101 / MAFF 303099) (Mesorhizobium loti (strain MAFF 303099)) protein is Isoleucine--tRNA ligase.